The sequence spans 330 residues: uncharacterized protein (330 aa).

10 helical membrane-spanning segments follow: residues 15-35, 41-61, 72-92, 102-122, 125-145, 175-195, 201-221, 238-258, 264-284, and 286-306; these read LTLIAPFFLWGTAMVAMKGVL, FFVATVRLIPAGILVLLWAMG, GWGWIILFALVDGTLFQGFLA, LGSVIIDSQPIAVALLSSWLF, VIGGIGWLGLLLGVGGISLIG, LWMLLASLSMAVGTVLIPFVS, VVATGWHMIIGGLPLLAIALV, LAYATVFGSAIAYGIFFYLAS, SLSSLTFLTPIFALSFSNLIL, and EQLSSLQWLGVAFTLVSIYLI. EamA domains follow at residues 22-146 and 182-308; these read FLWG…LIGL and LSMA…LINQ.

It belongs to the EamA transporter family.

It localises to the cell membrane. This is an uncharacterized protein from Synechocystis sp. (strain ATCC 27184 / PCC 6803 / Kazusa).